The following is a 127-amino-acid chain: Calcium-binding protein PBP1 (127 aa).

Residues 1-18 (MASPKSSTRPNQENQEPQ) show a composition bias toward polar residues. The disordered stretch occupies residues 1-20 (MASPKSSTRPNQENQEPQFQ). The EF-hand domain maps to 72 to 107 (LTDDDVRYMINEGDFDRDGALNQMEFCVLMFRLSPE). 4 residues coordinate Ca(2+): aspartate 85, aspartate 87, aspartate 89, and glutamate 96.

As to quaternary structure, interacts with PID.

Functionally, potential calcium sensor that binds calcium in vitro. The sequence is that of Calcium-binding protein PBP1 (PBP1) from Arabidopsis thaliana (Mouse-ear cress).